Here is a 665-residue protein sequence, read N- to C-terminus: MSPLLRFRKLSSFSEDTINPKPKQSATVEKPKRRRSGRCSCVDSCCWLIGYLCTAWWLLLFLYHSVPVPAMLQAPESPGTRLSRDGVKAFHPVILVPGIVTGGLELWEGRPCAEGLFRKRLWGASFSEILRRPLCWLEHLSLDSETGLDPSGIRVRAVPGLVAADYFAPCYFAWAVLIENLAKIGYEGKNLHMASYDWRLSFHNTEVRDQSLSRLKSKIELMYATNGFKKVVVVPHSMGAIYFLHFLKWVETPLPDGGGGGGPGWCAKHIKSVVNIGPAFLGVPKAVSNLLSAEGKDIAYARSLAPGLLDSELLKLQTLEHLMRMSHSWDSIVSLLPKGGEAIWGDLDSHAEEGLNCIYSKRKSSQLSLSNLHKQNYSLKPVSRVKEPAKYGRIVSFGKRASELPSSQLSTLNVKELSRVDGNSNDSTSCGEFWSEYNEMSRESIVKVAENTAYTATTVLDLLRFIAPKMMRRAEAHFSHGIADDLDDPKYGHYKYWSNPLETKLPEAPEMEMYCLYGVGIPTERSYIYKLATSSGKCKSSIPFRIDGSLDGDDVCLKGGTRFADGDESVPVISAGFMCAKGWRGKTRFNPSGMDTFLREYKHKPPGSLLESRGTESGAHVDIMGNVGLIEDVLRIAAGASGQEIGGDRIYSDVMRMSERISIKL.

Residues 48 to 68 form a helical membrane-spanning segment; it reads LIGYLCTAWWLLLFLYHSVPV. Ser237 acts as the Acyl-ester intermediate in catalysis. Active-site charge relay system residues include Asp567 and His620.

It belongs to the AB hydrolase superfamily. Lipase family.

The protein resides in the membrane. It catalyses the reaction a glycerophospholipid + a 1,2-diacyl-sn-glycerol = a monoacylglycerophospholipid + a triacyl-sn-glycerol. This Arabidopsis thaliana (Mouse-ear cress) protein is Putative phospholipid:diacylglycerol acyltransferase 2 (PDAT2).